A 148-amino-acid chain; its full sequence is Large ribosomal subunit protein bL9 (148 aa).

The protein belongs to the bacterial ribosomal protein bL9 family.

Binds to the 23S rRNA. In Leptospira biflexa serovar Patoc (strain Patoc 1 / Ames), this protein is Large ribosomal subunit protein bL9.